We begin with the raw amino-acid sequence, 29 residues long: Glucagon (29 aa).

This sequence belongs to the glucagon family.

The protein localises to the secreted. Glucagon plays a key role in glucose metabolism and homeostasis. Regulates blood glucose by increasing gluconeogenesis and decreasing glycolysis. In Polypterus senegalus (Senegal bichir), this protein is Glucagon (gcg).